Reading from the N-terminus, the 598-residue chain is DNA primase (598 aa).

The segment at 38–62 (CPFHDEKTPSFTVSEDKQICHCFGC) adopts a CHC2-type zinc-finger fold. Positions 260-341 (DEIILLEGFM…NVYVVQLPSG (82 aa)) constitute a Toprim domain. Residues glutamate 266, aspartate 310, and aspartate 312 each contribute to the Mg(2+) site.

The protein belongs to the DnaG primase family. As to quaternary structure, monomer. Interacts with DnaB. Zn(2+) serves as cofactor. The cofactor is Mg(2+).

The enzyme catalyses ssDNA + n NTP = ssDNA/pppN(pN)n-1 hybrid + (n-1) diphosphate.. Its function is as follows. RNA polymerase that catalyzes the synthesis of short RNA molecules used as primers for DNA polymerase during DNA replication. The protein is DNA primase of Staphylococcus epidermidis (strain ATCC 12228 / FDA PCI 1200).